Here is a 141-residue protein sequence, read N- to C-terminus: Transcription antitermination protein NusB (141 aa).

The protein belongs to the NusB family.

Involved in transcription antitermination. Required for transcription of ribosomal RNA (rRNA) genes. Binds specifically to the boxA antiterminator sequence of the ribosomal RNA (rrn) operons. This is Transcription antitermination protein NusB from Neisseria meningitidis serogroup B (strain ATCC BAA-335 / MC58).